A 424-amino-acid chain; its full sequence is Type II methyltransferase M.XorII (424 aa).

An SAM-dependent MTase C5-type domain is found at 4-367 (PIGIDLFAGA…GQIMKALRKK (364 aa)). Cys-83 is a catalytic residue. The disordered stretch occupies residues 404–424 (RSRPVDRPAPRRHEERELVTA). Over residues 406–424 (RPVDRPAPRRHEERELVTA) the composition is skewed to basic and acidic residues.

Belongs to the class I-like SAM-binding methyltransferase superfamily. C5-methyltransferase family.

The catalysed reaction is a 2'-deoxycytidine in DNA + S-adenosyl-L-methionine = a 5-methyl-2'-deoxycytidine in DNA + S-adenosyl-L-homocysteine + H(+). A methylase that recognizes the double-stranded sequence 5'-CGATCG-3', methylates C-? on both strands and protects the DNA from cleavage by the XorII endonuclease. The sequence is that of Type II methyltransferase M.XorII (xorIIM) from Xanthomonas oryzae pv. oryzae (strain KACC10331 / KXO85).